The chain runs to 838 residues: Periplasmic nitrate reductase (838 aa).

Residues 1–29 (MKVSRRAFIKQTAAAATASVAGVTLPAGA) constitute a signal peptide (tat-type signal). A 4Fe-4S Mo/W bis-MGD-type domain is found at 41 to 97 (LKWSKAPCRFCGTGCGVEVAVKDNRVVATQGDPKAEVNRGLNCVKGYFLSKIMYGKD). Residues cysteine 48, cysteine 51, cysteine 55, and cysteine 83 each contribute to the [4Fe-4S] cluster site. Mo-bis(molybdopterin guanine dinucleotide) is bound by residues lysine 85, glutamine 152, asparagine 177, cysteine 181, 214–221 (WGSNMAEM), 245–249 (STFTH), methionine 382, glutamine 386, asparagine 492, 518–519 (SD), lysine 541, aspartate 568, and 728–737 (TGRVLEHWHS). Position 804 (tryptophan 804) interacts with substrate. Mo-bis(molybdopterin guanine dinucleotide)-binding residues include asparagine 812 and lysine 829.

This sequence belongs to the prokaryotic molybdopterin-containing oxidoreductase family. NasA/NapA/NarB subfamily. As to quaternary structure, component of the periplasmic nitrate reductase NapAB complex composed of NapA and NapB. [4Fe-4S] cluster is required as a cofactor. The cofactor is Mo-bis(molybdopterin guanine dinucleotide). In terms of processing, predicted to be exported by the Tat system. The position of the signal peptide cleavage has not been experimentally proven.

The protein localises to the periplasm. The enzyme catalyses 2 Fe(II)-[cytochrome] + nitrate + 2 H(+) = 2 Fe(III)-[cytochrome] + nitrite + H2O. Its function is as follows. Catalytic subunit of the periplasmic nitrate reductase complex NapAB. Receives electrons from NapB and catalyzes the reduction of nitrate to nitrite. This chain is Periplasmic nitrate reductase, found in Ralstonia pickettii (strain 12J).